We begin with the raw amino-acid sequence, 242 residues long: Ribonuclease 3 (242 aa).

Residues 14–142 (LRRFAARFAL…VIGALYLSTG (129 aa)) form the RNase III domain. E56 lines the Mg(2+) pocket. D60 is a catalytic residue. The Mg(2+) site is built by D128 and E131. E131 is a catalytic residue. A DRBM domain is found at 170-235 (NHKSALQELT…ARGAYAALRS (66 aa)).

The protein belongs to the ribonuclease III family. In terms of assembly, homodimer. It depends on Mg(2+) as a cofactor.

The protein resides in the cytoplasm. It catalyses the reaction Endonucleolytic cleavage to 5'-phosphomonoester.. Its function is as follows. Digests double-stranded RNA. Involved in the processing of primary rRNA transcript to yield the immediate precursors to the large and small rRNAs (23S and 16S). Processes some mRNAs, and tRNAs when they are encoded in the rRNA operon. Processes pre-crRNA and tracrRNA of type II CRISPR loci if present in the organism. The protein is Ribonuclease 3 of Gloeobacter violaceus (strain ATCC 29082 / PCC 7421).